A 397-amino-acid polypeptide reads, in one-letter code: Elongation factor Tu (397 aa).

Residues 10-206 enclose the tr-type G domain; sequence KPHVNIGTIG…AVDSYIPTPE (197 aa). The tract at residues 19 to 26 is G1; that stretch reads GHVDHGKT. 19 to 26 provides a ligand contact to GTP; it reads GHVDHGKT. Threonine 26 is a binding site for Mg(2+). A G2 region spans residues 60–64; that stretch reads GITIN. The segment at 81–84 is G3; that stretch reads DCPG. GTP is bound by residues 81 to 85 and 136 to 139; these read DCPGH and NKAD. Residues 136-139 form a G4 region; it reads NKAD. The interval 174-176 is G5; the sequence is SAL.

This sequence belongs to the TRAFAC class translation factor GTPase superfamily. Classic translation factor GTPase family. EF-Tu/EF-1A subfamily. As to quaternary structure, monomer.

Its subcellular location is the cytoplasm. It carries out the reaction GTP + H2O = GDP + phosphate + H(+). In terms of biological role, GTP hydrolase that promotes the GTP-dependent binding of aminoacyl-tRNA to the A-site of ribosomes during protein biosynthesis. This Clostridium beijerinckii (strain ATCC 51743 / NCIMB 8052) (Clostridium acetobutylicum) protein is Elongation factor Tu.